Consider the following 679-residue polypeptide: Methionine--tRNA ligase (679 aa).

The short motif at 15–25 (PYANGPIHLGH) is the 'HIGH' region element. Cys146, Cys149, Cys159, and Cys162 together coordinate Zn(2+). The 'KMSKS' region signature appears at 332–336 (KMSKS). Residue Lys335 coordinates ATP. Positions 578-679 (DFAKIDLRIA…EGAQPGMKVK (102 aa)) constitute a tRNA-binding domain.

The protein belongs to the class-I aminoacyl-tRNA synthetase family. MetG type 1 subfamily. As to quaternary structure, homodimer. Zn(2+) serves as cofactor.

The protein localises to the cytoplasm. The enzyme catalyses tRNA(Met) + L-methionine + ATP = L-methionyl-tRNA(Met) + AMP + diphosphate. Functionally, is required not only for elongation of protein synthesis but also for the initiation of all mRNA translation through initiator tRNA(fMet) aminoacylation. In Shewanella pealeana (strain ATCC 700345 / ANG-SQ1), this protein is Methionine--tRNA ligase.